Consider the following 1073-residue polypeptide: Carbamoyl phosphate synthase large chain (1073 aa).

The carboxyphosphate synthetic domain stretch occupies residues Pro2 to Glu403. ATP contacts are provided by Arg129, Arg169, Gly175, Gly176, Glu208, Leu210, Glu215, Gly241, Ile242, His243, Gln285, and Glu299. The region spanning Asp133 to Val328 is the ATP-grasp 1 domain. Mg(2+) contacts are provided by Gln285, Glu299, and Asn301. Gln285, Glu299, and Asn301 together coordinate Mn(2+). An oligomerization domain region spans residues Val404–Ala553. The carbamoyl phosphate synthetic domain stretch occupies residues Asn554–Asn936. The ATP-grasp 2 domain occupies Gln679 to Ala870. Positions 715, 754, 756, 761, 786, 787, 788, 789, 829, and 841 each coordinate ATP. Positions 829, 841, and 843 each coordinate Mg(2+). 3 residues coordinate Mn(2+): Gln829, Glu841, and Asn843. The MGS-like domain occupies Ser937–Lys1073. Residues Ser937 to Lys1073 are allosteric domain.

The protein belongs to the CarB family. As to quaternary structure, composed of two chains; the small (or glutamine) chain promotes the hydrolysis of glutamine to ammonia, which is used by the large (or ammonia) chain to synthesize carbamoyl phosphate. Tetramer of heterodimers (alpha,beta)4. The cofactor is Mg(2+). It depends on Mn(2+) as a cofactor.

It catalyses the reaction hydrogencarbonate + L-glutamine + 2 ATP + H2O = carbamoyl phosphate + L-glutamate + 2 ADP + phosphate + 2 H(+). The catalysed reaction is hydrogencarbonate + NH4(+) + 2 ATP = carbamoyl phosphate + 2 ADP + phosphate + 2 H(+). Its pathway is amino-acid biosynthesis; L-arginine biosynthesis; carbamoyl phosphate from bicarbonate: step 1/1. It participates in pyrimidine metabolism; UMP biosynthesis via de novo pathway; (S)-dihydroorotate from bicarbonate: step 1/3. Large subunit of the glutamine-dependent carbamoyl phosphate synthetase (CPSase). CPSase catalyzes the formation of carbamoyl phosphate from the ammonia moiety of glutamine, carbonate, and phosphate donated by ATP, constituting the first step of 2 biosynthetic pathways, one leading to arginine and/or urea and the other to pyrimidine nucleotides. The large subunit (synthetase) binds the substrates ammonia (free or transferred from glutamine from the small subunit), hydrogencarbonate and ATP and carries out an ATP-coupled ligase reaction, activating hydrogencarbonate by forming carboxy phosphate which reacts with ammonia to form carbamoyl phosphate. The protein is Carbamoyl phosphate synthase large chain of Escherichia coli (strain K12).